The primary structure comprises 430 residues: UDP-N-acetylglucosamine 1-carboxyvinyltransferase (430 aa).

22–23 (KN) is a binding site for phosphoenolpyruvate. Residue arginine 102 participates in UDP-N-acetyl-alpha-D-glucosamine binding. Residue cysteine 126 is the Proton donor of the active site. A 2-(S-cysteinyl)pyruvic acid O-phosphothioketal modification is found at cysteine 126. UDP-N-acetyl-alpha-D-glucosamine contacts are provided by residues 131–135 (RPVDL), 172–175 (KVSV), aspartate 317, and isoleucine 339.

Belongs to the EPSP synthase family. MurA subfamily.

The protein localises to the cytoplasm. It catalyses the reaction phosphoenolpyruvate + UDP-N-acetyl-alpha-D-glucosamine = UDP-N-acetyl-3-O-(1-carboxyvinyl)-alpha-D-glucosamine + phosphate. It functions in the pathway cell wall biogenesis; peptidoglycan biosynthesis. Its function is as follows. Cell wall formation. Adds enolpyruvyl to UDP-N-acetylglucosamine. The chain is UDP-N-acetylglucosamine 1-carboxyvinyltransferase from Agrobacterium fabrum (strain C58 / ATCC 33970) (Agrobacterium tumefaciens (strain C58)).